The following is a 254-amino-acid chain: MEIDLNADLGEGCGSDEALLDLVTSANIACGWHAGGANAMRDCVRWAVQKGVSIGAHPSFHDPENFGRKEMQLPPGDIYAGVLYQLGALSAIAQAEGGRIAHVKPHGALYNQAARDPLIADAVVSAIHDFDPSLAVFGLANSVFIAAARQAGLAAVEEVFADRGYRADGSLVPRSLPGALIDDEDAVLARTLDMVRNRQVRALSGEWVPLNAQTVCLHGDGPHALAFAKRIRAALEAAGVDVVAPGALQADEGA.

It belongs to the LamB/PxpA family. Forms a complex composed of PxpA, PxpB and PxpC.

The enzyme catalyses 5-oxo-L-proline + ATP + 2 H2O = L-glutamate + ADP + phosphate + H(+). Catalyzes the cleavage of 5-oxoproline to form L-glutamate coupled to the hydrolysis of ATP to ADP and inorganic phosphate. The chain is 5-oxoprolinase subunit A from Burkholderia orbicola (strain MC0-3).